A 1427-amino-acid chain; its full sequence is DNA-directed RNA polymerase subunit beta' (1427 aa).

Zn(2+) contacts are provided by Cys70, Cys72, Cys85, and Cys88. Residues Asp461, Asp463, and Asp465 each coordinate Mg(2+). Cys809, Cys882, Cys889, and Cys892 together coordinate Zn(2+). Residues 1394–1427 (EAAIGDDPLGKVQGEDFTTDDVMVEERPEGASEE) form a disordered region. The segment covering 1417–1427 (VEERPEGASEE) has biased composition (basic and acidic residues).

It belongs to the RNA polymerase beta' chain family. The RNAP catalytic core consists of 2 alpha, 1 beta, 1 beta' and 1 omega subunit. When a sigma factor is associated with the core the holoenzyme is formed, which can initiate transcription. Requires Mg(2+) as cofactor. Zn(2+) serves as cofactor.

It catalyses the reaction RNA(n) + a ribonucleoside 5'-triphosphate = RNA(n+1) + diphosphate. Its function is as follows. DNA-dependent RNA polymerase catalyzes the transcription of DNA into RNA using the four ribonucleoside triphosphates as substrates. The protein is DNA-directed RNA polymerase subunit beta' of Sphingopyxis alaskensis (strain DSM 13593 / LMG 18877 / RB2256) (Sphingomonas alaskensis).